Reading from the N-terminus, the 321-residue chain is Olfactory receptor 51V1 (321 aa).

Residues 1–34 (MFLSSRMITSVSPSTSTNSSFLLTGFSGMEQQYP) are Extracellular-facing. An N-linked (GlcNAc...) asparagine glycan is attached at Asn18. Residues 35-55 (WLSIPFSSIYAMVLLGNCMVL) traverse the membrane as a helical segment. Topologically, residues 56–63 (HVIWTEPS) are cytoplasmic. Residues 64-84 (LHQPMFYFLSMLALTDLCMGL) traverse the membrane as a helical segment. The Extracellular portion of the chain corresponds to 85 to 108 (STVYTVLGILWGIIREISLDSCIA). The cysteines at positions 106 and 188 are disulfide-linked. Residues 109–129 (QSYFIHGLSFMESSVLLTMAF) traverse the membrane as a helical segment. At 130-148 (DRYIAICNPLRYSSILTNS) the chain is on the cytoplasmic side. Residues 149–169 (RIIKIGLTIIGRSFFFITPPI) form a helical membrane-spanning segment. Topologically, residues 170-205 (ICLKFFNYCHFHILSHSFCLHQDLLRLACSDIRFNS) are extracellular. Residues 206 to 226 (YYALMLVICILLLDAILILFS) form a helical membrane-spanning segment. Residues 227–246 (YILILKSVLAVASQEERHKL) lie on the Cytoplasmic side of the membrane. The chain crosses the membrane as a helical span at residues 247-267 (FQTCISHICAVLVFYIPIISL). At 268 to 282 (TMVHRFGKHLSPVAH) the chain is on the extracellular side. Residues 283–303 (VLIGNIYILFPPLMNPIIYSV) form a helical membrane-spanning segment. Residues 304-321 (KTQQIHTRMLRLFSLKRY) lie on the Cytoplasmic side of the membrane.

It belongs to the G-protein coupled receptor 1 family.

It is found in the cell membrane. Its function is as follows. Odorant receptor. The polypeptide is Olfactory receptor 51V1 (OR51V1) (Homo sapiens (Human)).